We begin with the raw amino-acid sequence, 513 residues long: Transmembrane protein 151B (513 aa).

Positions 1–29 are disordered; the sequence is MSPAAPVTESSAAEVHREQTDAPREPQRP. The segment covering 14-28 has biased composition (basic and acidic residues); sequence EVHREQTDAPREPQR. The next 3 helical transmembrane spans lie at 46–66, 93–113, and 274–294; these read CLLL…CQVT, YIYI…VECW, and LPWY…LSWP. N-linked (GlcNAc...) asparagine glycosylation is found at Asn-366, Asn-418, and Asn-505.

It belongs to the TMEM151 family.

Its subcellular location is the membrane. In Danio rerio (Zebrafish), this protein is Transmembrane protein 151B (tmem151b).